A 347-amino-acid polypeptide reads, in one-letter code: BSD domain-containing protein C22A12.14c (347 aa).

2 positions are modified to phosphothreonine: T123 and T125. A BSD domain is found at 167–219 (WEKEISIDGKTEEISLLLEEYPDLRKQMESLVPSEVSYDDFWKRFFWHKEVVQ). Residues 229-347 (DEEEIFSWGD…DDDEDDDDWE (119 aa)) form a disordered region. Phosphoserine is present on residues S235, S241, and S246. Acidic residues predominate over residues 240–251 (RSDEEESDNEQV). A compositionally biased stretch (basic and acidic residues) spans 297 to 312 (HDGEVDGEVKEEEENK). Positions 313-325 (VSSSSNIEASQSS) are enriched in low complexity. The segment covering 327 to 337 (EVKDEANRKVD) has biased composition (basic and acidic residues). Residues 338-347 (DDDEDDDDWE) are compositionally biased toward acidic residues.

Its subcellular location is the cytoplasm. This Schizosaccharomyces pombe (strain 972 / ATCC 24843) (Fission yeast) protein is BSD domain-containing protein C22A12.14c.